The following is a 197-amino-acid chain: Shikimate kinase (197 aa).

14–19 serves as a coordination point for ATP; sequence GSGKST. Residue serine 18 coordinates Mg(2+). The substrate site is built by aspartate 36, arginine 60, and glycine 82. Arginine 120 is a binding site for ATP. Arginine 147 serves as a coordination point for substrate.

It belongs to the shikimate kinase family. In terms of assembly, monomer. The cofactor is Mg(2+).

It is found in the cytoplasm. The enzyme catalyses shikimate + ATP = 3-phosphoshikimate + ADP + H(+). The protein operates within metabolic intermediate biosynthesis; chorismate biosynthesis; chorismate from D-erythrose 4-phosphate and phosphoenolpyruvate: step 5/7. In terms of biological role, catalyzes the specific phosphorylation of the 3-hydroxyl group of shikimic acid using ATP as a cosubstrate. The protein is Shikimate kinase of Prosthecochloris aestuarii (strain DSM 271 / SK 413).